A 73-amino-acid polypeptide reads, in one-letter code: Somatostatin-2 (73 aa).

Positions 1 to 45 are excised as a propeptide; that stretch reads SAGLLTQEWSAVEDLLAQMSLPEADAQRDAEMVSTATGGGRMNQE. The tract at residues 23 to 58 is disordered; it reads EADAQRDAEMVSTATGGGRMNQESIEPPNNLPPRER. An intrachain disulfide couples C62 to C73.

Belongs to the somatostatin family.

Its subcellular location is the secreted. Functionally, somatostatin inhibits the release of somatotropin. This is Somatostatin-2 (sst2) from Platichthys flesus (European flounder).